Reading from the N-terminus, the 1143-residue chain is Disease resistance protein Pik-1 (1143 aa).

Residues 1–190 (MEAAAMAVTA…PLRIMGGEMQ (190 aa)) form a structured coiled coil (CC) domain region. In terms of domain architecture, HMA spans 189 to 258 (MQKIVFKIPM…KVGHAELLQV (70 aa)). Residues 191–264 (KIVFKIPMVD…LLQVSQVKED (74 aa)) form an HMA-like domain region. The NB-ARC domain maps to 282-570 (HEVKTICILG…WIAEGFVSEE (289 aa)). 10 LRR repeats span residues 681–706 (FKRL…ICEQ), 708–731 (SLRV…MRKL), 732–754 (KHLE…IGEL), 756–777 (HLRI…IREL), 778–800 (QHLH…VGKL), 802–823 (NLKI…IGEL), 824–848 (NHLQ…QISQ), 945–968 (MPNL…INGT), 979–1002 (DSRL…EFKF), and 1004–1027 (AGPA…VFRC).

Belongs to the disease resistance NB-LRR family. In terms of assembly, interacts with AVR-Pik through its N-terminal part containing the HMA-like domain.

Disease resistance (R) protein that specifically recognizes the AVR-Pik effector avirulence protein from M.oryzae. Resistance proteins guard the plant against pathogens that contain an appropriate avirulence protein via an indirect interaction with this avirulence protein. That triggers a defense system including the hypersensitive response, which restricts the pathogen growth. Contribution of Pik-2 is required to recognize the effector avirulence protein AVR-Pik. This Oryza sativa subsp. japonica (Rice) protein is Disease resistance protein Pik-1.